Reading from the N-terminus, the 112-residue chain is DNA-directed RNA polymerase subunit Rpo11 (112 aa).

Belongs to the archaeal Rpo11/eukaryotic RPB11/RPC19 RNA polymerase subunit family. As to quaternary structure, part of the RNA polymerase complex.

It localises to the cytoplasm. It catalyses the reaction RNA(n) + a ribonucleoside 5'-triphosphate = RNA(n+1) + diphosphate. Its function is as follows. DNA-dependent RNA polymerase (RNAP) catalyzes the transcription of DNA into RNA using the four ribonucleoside triphosphates as substrates. In Methanopyrus kandleri (strain AV19 / DSM 6324 / JCM 9639 / NBRC 100938), this protein is DNA-directed RNA polymerase subunit Rpo11.